Reading from the N-terminus, the 235-residue chain is Probable ribosomal RNA small subunit methyltransferase A (235 aa).

S-adenosyl-L-methionine-binding residues include His9, Leu11, Gly34, Glu55, Asp78, and Asn93.

This sequence belongs to the class I-like SAM-binding methyltransferase superfamily. rRNA adenine N(6)-methyltransferase family. RsmA subfamily.

It localises to the cytoplasm. Specifically dimethylates two adjacent adenosines in the loop of a conserved hairpin near the 3'-end of 16S rRNA in the 30S particle. May play a critical role in biogenesis of 30S subunits. The sequence is that of Probable ribosomal RNA small subunit methyltransferase A from Pyrobaculum islandicum (strain DSM 4184 / JCM 9189 / GEO3).